The sequence spans 675 residues: Probable potassium transport system protein Kup (675 aa).

Positions 1–12 (MEPAMPEHDGDH) are enriched in basic and acidic residues. Residues 1–25 (MEPAMPEHDGDHASNPPHGVGIPND) are disordered. 12 consecutive transmembrane segments (helical) span residues 62–82 (ALLA…LYAL), 104–124 (LASL…VILI), 153–173 (WLFG…SIIT), 195–215 (IIIP…VLGT), 222–242 (FGPI…KGIF), 255–275 (FALE…GSVV), 300–320 (WLFF…ALLI), 332–352 (LLVP…ATVI), 390–410 (IYLP…VLAF), 419–439 (AYGI…MVVF), 450–470 (VAIV…ANVL), and 472–492 (IPDG…IMTT).

This sequence belongs to the HAK/KUP transporter (TC 2.A.72) family.

The protein localises to the cell inner membrane. It carries out the reaction K(+)(in) + H(+)(in) = K(+)(out) + H(+)(out). In terms of biological role, transport of potassium into the cell. Likely operates as a K(+):H(+) symporter. The polypeptide is Probable potassium transport system protein Kup (Gluconobacter oxydans (strain 621H) (Gluconobacter suboxydans)).